The sequence spans 309 residues: Aspartate carbamoyltransferase catalytic subunit (309 aa).

2 residues coordinate carbamoyl phosphate: Arg-59 and Thr-60. An L-aspartate-binding site is contributed by Lys-87. Positions 109, 139, and 142 each coordinate carbamoyl phosphate. Arg-172 and Arg-224 together coordinate L-aspartate. Residues Ala-265 and Pro-266 each contribute to the carbamoyl phosphate site.

This sequence belongs to the aspartate/ornithine carbamoyltransferase superfamily. ATCase family. As to quaternary structure, heterododecamer (2C3:3R2) of six catalytic PyrB chains organized as two trimers (C3), and six regulatory PyrI chains organized as three dimers (R2).

It carries out the reaction carbamoyl phosphate + L-aspartate = N-carbamoyl-L-aspartate + phosphate + H(+). Its pathway is pyrimidine metabolism; UMP biosynthesis via de novo pathway; (S)-dihydroorotate from bicarbonate: step 2/3. In terms of biological role, catalyzes the condensation of carbamoyl phosphate and aspartate to form carbamoyl aspartate and inorganic phosphate, the committed step in the de novo pyrimidine nucleotide biosynthesis pathway. In Streptococcus uberis (strain ATCC BAA-854 / 0140J), this protein is Aspartate carbamoyltransferase catalytic subunit.